The sequence spans 1385 residues: Serine-aspartate repeat-containing protein D (1385 aa).

The signal sequence occupies residues 1-35 (MLNRENKTAITRKGMVSNRLNKFSIRKYTVGTASI). The short motif at 23-34 (FSIRKYTVGTAS) is the YSIRK-G/S signaling motif element. Positions 36-568 (LVGTTLIFGL…NNQSGGAGQE (533 aa)) are ligand binding A region. Disordered stretches follow at residues 54-162 (ESTN…DLLE) and 200-224 (ETLVDNNSNSNNENNADIILPKSTA). Composition is skewed to polar residues over residues 62–71 (EATTSASDNQ) and 94–109 (EMVSSQGNETTSNGNK). Residues 130 to 145 (KSDEQASPKSTNEDLN) show a composition bias toward basic and acidic residues. Residues 146-155 (TKQTISNQEG) are compositionally biased toward polar residues. Low complexity predominate over residues 205 to 214 (NNSNSNNENN). 5 CNA-B domains span residues 569 to 680 (VYKI…IYKP), 681 to 791 (KYNL…YKTP), 792 to 901 (KYNL…FYKP), 902 to 1012 (TYNL…YKTP), and 1013 to 1123 (KYSL…EEET). 3 disordered regions span residues 856–886 (FETPSGYTPTQVGSGTDEGIDSNGTSTTGVI), 972–992 (YTPTSVTSGNDTEKDSNGLTT), and 1077–1361 (FEKP…SNNA). Polar residues-rich tracts occupy residues 860–869 (SGYTPTQVGS) and 972–981 (YTPTSVTSGN). A compositionally biased stretch (low complexity) spans 1081 to 1090 (TGLTQTGTNT). Acidic residues-rich tracts occupy residues 1091–1101 (TEDDKDADGGE) and 1118–1324 (YYEE…DSDS). An LPXTG sorting signal motif is present at residues 1348-1352 (LPETG). Thr-1351 carries the post-translational modification Pentaglycyl murein peptidoglycan amidated threonine. The propeptide at 1352 to 1385 (GNENSGSNNATLFGGLFAALGSLLLFGRRKKQNK) is removed by sortase.

Belongs to the serine-aspartate repeat-containing protein (SDr) family. In terms of assembly, interacts with host DSG1; this interaction increases S.aureus adherence to keratinocytes.

The protein localises to the secreted. It localises to the cell wall. Its function is as follows. Cell surface-associated calcium-binding protein which plays an important role in adhesion and pathogenesis. Mediates interactions with components of the extracellular matrix such as host DSG1 to promote bacterial adhesion to host cells. Contributes to the resistance to killing by innate immune components such as neutrophils present in blood and thus attenuates bacterial clearance. This Staphylococcus aureus (strain Mu50 / ATCC 700699) protein is Serine-aspartate repeat-containing protein D (sdrD).